The following is a 115-amino-acid chain: Immunoglobulin kappa variable 5-2 (115 aa).

An N-terminal signal peptide occupies residues 1-20; the sequence is MGSQVHLLSFLLLWISDTRA. Residues 21–43 form a framework-1 region; that stretch reads ETTLTQSPAFMSATPGDKVNISC. The Ig-like domain maps to 22 to 115; the sequence is TTLTQSPAFM…YFCLQHDNFP (94 aa). Asparagine 40 carries N-linked (GlcNAc...) asparagine glycosylation. A Phosphoserine modification is found at serine 42. Cysteine 43 and cysteine 108 are oxidised to a cystine. Residues 44-54 are complementarity-determining-1; sequence KASQDIDDDMN. Residues 55–69 form a framework-2 region; the sequence is WYQQKPGEAAIFIIQ. The segment at 70 to 76 is complementarity-determining-2; that stretch reads EATTLVP. A framework-3 region spans residues 77–108; it reads GIPPRFSGSGYGTDFTLTINNIESEDAAYYFC. Residues 109–115 form a complementarity-determining-3 region; sequence LQHDNFP.

Immunoglobulins are composed of two identical heavy chains and two identical light chains; disulfide-linked.

It is found in the secreted. It localises to the cell membrane. Functionally, v region of the variable domain of immunoglobulin light chains that participates in the antigen recognition. Immunoglobulins, also known as antibodies, are membrane-bound or secreted glycoproteins produced by B lymphocytes. In the recognition phase of humoral immunity, the membrane-bound immunoglobulins serve as receptors which, upon binding of a specific antigen, trigger the clonal expansion and differentiation of B lymphocytes into immunoglobulins-secreting plasma cells. Secreted immunoglobulins mediate the effector phase of humoral immunity, which results in the elimination of bound antigens. The antigen binding site is formed by the variable domain of one heavy chain, together with that of its associated light chain. Thus, each immunoglobulin has two antigen binding sites with remarkable affinity for a particular antigen. The variable domains are assembled by a process called V-(D)-J rearrangement and can then be subjected to somatic hypermutations which, after exposure to antigen and selection, allow affinity maturation for a particular antigen. The polypeptide is Immunoglobulin kappa variable 5-2 (Homo sapiens (Human)).